The primary structure comprises 393 residues: MKLSQVSALAACVPAATARFVELMEADHVVLRPDEPTFLIETAPGKTQWVTEEQKWELRRDGQRFMDITATKDLGSQGLRIKESVEFPKKCVNQDEVKSLAKNLDTAPMKANLEKLSSFHTRYYNSEWGLKSSDWVLEKVNEMIKEAGADKTVTAQSFPHTWKQHSVIATIPGQTNSTIVIGAHQDSINLWLPILAAPGADDDGSGTVTIMEVFRALLKSKDVVQGKAINTIEFHWYSAEEGGLLGSQAIFQQYEKQQRDVKAMLQQDMTGYVKGTLDAGLPESVGVIVDFVHAGLTKFIKTVIEQYCAIPWVETKCGYACSDHASASKAGYPSAFVIESSFDKSDPNIHTTSDLIEHLSFDHMLQHAHMTLGFVYELGFHNFAKAVEGDGEL.

Positions methionine 1–alanine 18 are cleaved as a signal peptide. Residues arginine 19–serine 84 constitute a propeptide that is removed on maturation. The N-linked (GlcNAc...) asparagine glycan is linked to asparagine 176. Residues histidine 184, aspartate 202, glutamate 241, and aspartate 268 each contribute to the Zn(2+) site. Cysteine 317 and cysteine 321 are disulfide-bonded. Histidine 350 is a Zn(2+) binding site.

Belongs to the peptidase M28 family. M28E subfamily. In terms of assembly, monomer. It depends on Zn(2+) as a cofactor.

The protein localises to the secreted. Functionally, extracellular aminopeptidase that allows assimilation of proteinaceous substrates. This chain is Leucine aminopeptidase 1 (LAP1), found in Metarhizium robertsii (strain ARSEF 23 / ATCC MYA-3075) (Metarhizium anisopliae (strain ARSEF 23)).